We begin with the raw amino-acid sequence, 231 residues long: 5'-methylthioadenosine/S-adenosylhomocysteine nucleosidase (231 aa).

Catalysis depends on glutamate 12, which acts as the Proton acceptor. Residues glycine 78, methionine 153, and methionine 174–glutamate 175 each bind substrate. The active-site Proton donor is aspartate 198.

The protein belongs to the PNP/UDP phosphorylase family. MtnN subfamily.

The catalysed reaction is S-adenosyl-L-homocysteine + H2O = S-(5-deoxy-D-ribos-5-yl)-L-homocysteine + adenine. It catalyses the reaction S-methyl-5'-thioadenosine + H2O = 5-(methylsulfanyl)-D-ribose + adenine. The enzyme catalyses 5'-deoxyadenosine + H2O = 5-deoxy-D-ribose + adenine. It participates in amino-acid biosynthesis; L-methionine biosynthesis via salvage pathway; S-methyl-5-thio-alpha-D-ribose 1-phosphate from S-methyl-5'-thioadenosine (hydrolase route): step 1/2. Functionally, catalyzes the irreversible cleavage of the glycosidic bond in both 5'-methylthioadenosine (MTA) and S-adenosylhomocysteine (SAH/AdoHcy) to adenine and the corresponding thioribose, 5'-methylthioribose and S-ribosylhomocysteine, respectively. Also cleaves 5'-deoxyadenosine, a toxic by-product of radical S-adenosylmethionine (SAM) enzymes, into 5-deoxyribose and adenine. This chain is 5'-methylthioadenosine/S-adenosylhomocysteine nucleosidase, found in Bacillus cereus (strain B4264).